A 910-amino-acid chain; its full sequence is Eukaryotic translation initiation factor 3 subunit C (910 aa).

Residues 1–21 (MSRFFANGSDSESESSEDEIQ) are disordered. Residues 11-20 (SESESSEDEI) are compositionally biased toward acidic residues. Phosphoserine is present on residues Ser34, Ser165, Ser176, and Ser185. The disordered stretch occupies residues 157-279 (FREAPDQESE…IRKRAEDDED (123 aa)). Positions 162-186 (DQESEAEDEVVALESDGGDAGDDSD) are enriched in acidic residues. Positions 188-207 (GVKPTEAAPKAVKTAPAKAA) are enriched in low complexity. A compositionally biased stretch (acidic residues) spans 209-235 (ADDDDSDDSIDWDSDSESETESSDDEN). Basic and acidic residues predominate over residues 240–268 (MRERFLKRTTEKEEKDDDKRKDKRKEQKI). The region spanning 639–815 (FHMHINLELL…ETVVMHRSEP (177 aa)) is the PCI domain. The disordered stretch occupies residues 847–910 (FFQRGNMGNR…QQQVQTIDEE (64 aa)). The span at 862-874 (NRNQNNQGGNWLG) shows a compositional bias: low complexity. Residues 882 to 891 (RNRNQRGHHK) are compositionally biased toward basic residues. Over residues 895-910 (DRQQQQQQQVQTIDEE) the composition is skewed to low complexity.

This sequence belongs to the eIF-3 subunit C family. Component of the eukaryotic translation initiation factor 3 (eIF-3) complex. The eIF-3 complex interacts with pix.

It is found in the cytoplasm. Functionally, component of the eukaryotic translation initiation factor 3 (eIF-3) complex, which is involved in protein synthesis of a specialized repertoire of mRNAs and, together with other initiation factors, stimulates binding of mRNA and methionyl-tRNAi to the 40S ribosome. The eIF-3 complex specifically targets and initiates translation of a subset of mRNAs involved in cell proliferation. The sequence is that of Eukaryotic translation initiation factor 3 subunit C from Drosophila erecta (Fruit fly).